Consider the following 447-residue polypeptide: Tetratricopeptide repeat protein 23 (447 aa).

TPR repeat units follow at residues 45–78, 137–170, 186–219, and 356–389; these read LHLCEEKAKSYSNSHEYKQAVHELVRCVALTRIC, IELFHTMGRALLSLQKFKEAAENLTKAERLSKEL, ARIRLSFAQVYQGQKKSKEALSHYQAALEYVEIS, and AETYRLLGGADLAQGNHSGARKKLKKCLQIQTLL.

In terms of assembly, found Associated with the EvC complex composed of EFCAB7, IQCE, EVC2 and EVC.

The protein localises to the cell projection. It localises to the cilium. Functionally, participates positively in the ciliary Hedgehog (Hh) signaling. The sequence is that of Tetratricopeptide repeat protein 23 (TTC23) from Homo sapiens (Human).